A 241-amino-acid chain; its full sequence is DNA repair protein RecO (241 aa).

Belongs to the RecO family.

Involved in DNA repair and RecF pathway recombination. This chain is DNA repair protein RecO, found in Yersinia enterocolitica serotype O:8 / biotype 1B (strain NCTC 13174 / 8081).